We begin with the raw amino-acid sequence, 122 residues long: Large ribosomal subunit protein uL14c (122 aa).

The protein belongs to the universal ribosomal protein uL14 family. Part of the 50S ribosomal subunit.

It is found in the plastid. The protein localises to the chloroplast. Its function is as follows. Binds to 23S rRNA. The sequence is that of Large ribosomal subunit protein uL14c from Dioscorea elephantipes (Elephant's foot yam).